Consider the following 468-residue polypeptide: 6-phospho-beta-galactosidase (468 aa).

D-galactose 6-phosphate-binding residues include glutamine 19, histidine 116, asparagine 159, glutamate 160, and asparagine 297. The active-site Proton donor is glutamate 160. Glutamate 375 acts as the Nucleophile in catalysis. D-galactose 6-phosphate contacts are provided by serine 428, tryptophan 429, lysine 435, and tyrosine 437.

It belongs to the glycosyl hydrolase 1 family.

The enzyme catalyses a 6-phospho-beta-D-galactoside + H2O = D-galactose 6-phosphate + an alcohol. It functions in the pathway carbohydrate metabolism; lactose degradation; D-galactose 6-phosphate and beta-D-glucose from lactose 6-phosphate: step 1/1. The chain is 6-phospho-beta-galactosidase from Streptococcus pyogenes serotype M5 (strain Manfredo).